Reading from the N-terminus, the 538-residue chain is Bifunctional purine biosynthesis protein PurH (538 aa).

An MGS-like domain is found at 8–158 (IPAPDKVKIR…KNHAYVTVVT (151 aa)).

The protein belongs to the PurH family.

It carries out the reaction (6R)-10-formyltetrahydrofolate + 5-amino-1-(5-phospho-beta-D-ribosyl)imidazole-4-carboxamide = 5-formamido-1-(5-phospho-D-ribosyl)imidazole-4-carboxamide + (6S)-5,6,7,8-tetrahydrofolate. The catalysed reaction is IMP + H2O = 5-formamido-1-(5-phospho-D-ribosyl)imidazole-4-carboxamide. It functions in the pathway purine metabolism; IMP biosynthesis via de novo pathway; 5-formamido-1-(5-phospho-D-ribosyl)imidazole-4-carboxamide from 5-amino-1-(5-phospho-D-ribosyl)imidazole-4-carboxamide (10-formyl THF route): step 1/1. Its pathway is purine metabolism; IMP biosynthesis via de novo pathway; IMP from 5-formamido-1-(5-phospho-D-ribosyl)imidazole-4-carboxamide: step 1/1. In Agrobacterium fabrum (strain C58 / ATCC 33970) (Agrobacterium tumefaciens (strain C58)), this protein is Bifunctional purine biosynthesis protein PurH.